We begin with the raw amino-acid sequence, 836 residues long: Protein translocase subunit SecA (836 aa).

ATP is bound by residues Q85, 103 to 107, and D492; that span reads GEGKT. 4 residues coordinate Zn(2+): C820, C822, C831, and C832.

The protein belongs to the SecA family. As to quaternary structure, monomer and homodimer. Part of the essential Sec protein translocation apparatus which comprises SecA, SecYEG and auxiliary proteins SecDF. Other proteins may also be involved. The cofactor is Zn(2+).

It localises to the cell membrane. Its subcellular location is the cytoplasm. It carries out the reaction ATP + H2O + cellular proteinSide 1 = ADP + phosphate + cellular proteinSide 2.. Its function is as follows. Part of the Sec protein translocase complex. Interacts with the SecYEG preprotein conducting channel. Has a central role in coupling the hydrolysis of ATP to the transfer of proteins into and across the cell membrane, serving as an ATP-driven molecular motor driving the stepwise translocation of polypeptide chains across the membrane. This Clostridium botulinum (strain Alaska E43 / Type E3) protein is Protein translocase subunit SecA.